The chain runs to 397 residues: Enoyl-[acyl-carrier-protein] reductase [NADH] (397 aa).

NAD(+) is bound by residues 48–53 (GASTGY), 74–75 (FE), 111–112 (DA), and 139–140 (VA). Residue tyrosine 225 coordinates substrate. Tyrosine 235 functions as the Proton donor in the catalytic mechanism. Residues lysine 244 and 273–275 (VVT) each bind NAD(+).

Belongs to the TER reductase family. As to quaternary structure, monomer.

It carries out the reaction a 2,3-saturated acyl-[ACP] + NAD(+) = a (2E)-enoyl-[ACP] + NADH + H(+). It participates in lipid metabolism; fatty acid biosynthesis. Involved in the final reduction of the elongation cycle of fatty acid synthesis (FAS II). Catalyzes the reduction of a carbon-carbon double bond in an enoyl moiety that is covalently linked to an acyl carrier protein (ACP). The polypeptide is Enoyl-[acyl-carrier-protein] reductase [NADH] (Burkholderia thailandensis (strain ATCC 700388 / DSM 13276 / CCUG 48851 / CIP 106301 / E264)).